The following is a 396-amino-acid chain: Elongation factor Tu (396 aa).

Residues 10 to 206 (KPHVNIGTIG…AVDESVPDPV (197 aa)) enclose the tr-type G domain. Residues 19 to 26 (GHVDHGKT) form a G1 region. 19–26 (GHVDHGKT) contacts GTP. A Mg(2+)-binding site is contributed by Thr26. A G2 region spans residues 62 to 66 (GITIN). The segment at 83–86 (DAPG) is G3. GTP-binding positions include 83-87 (DAPGH) and 138-141 (NKSD). Residues 138–141 (NKSD) form a G4 region. A G5 region spans residues 176–178 (SGL).

This sequence belongs to the TRAFAC class translation factor GTPase superfamily. Classic translation factor GTPase family. EF-Tu/EF-1A subfamily. Monomer.

It is found in the cytoplasm. It carries out the reaction GTP + H2O = GDP + phosphate + H(+). GTP hydrolase that promotes the GTP-dependent binding of aminoacyl-tRNA to the A-site of ribosomes during protein biosynthesis. The chain is Elongation factor Tu from Pseudarthrobacter chlorophenolicus (strain ATCC 700700 / DSM 12829 / CIP 107037 / JCM 12360 / KCTC 9906 / NCIMB 13794 / A6) (Arthrobacter chlorophenolicus).